The chain runs to 930 residues: Probable outer membrane protein pmp8 (930 aa).

Residues 1 to 26 (MKIPLHKLLISSTLVTPILLSIATYG) form the signal peptide. The 295-residue stretch at 636-930 (SIYQQRGLWA…NVDCGLRYSF (295 aa)) folds into the Autotransporter domain.

The protein belongs to the PMP outer membrane protein family.

Its subcellular location is the secreted. The protein resides in the cell wall. It is found in the cell outer membrane. This is Probable outer membrane protein pmp8 (pmp8) from Chlamydia pneumoniae (Chlamydophila pneumoniae).